We begin with the raw amino-acid sequence, 518 residues long: Endoglucanase 18 (518 aa).

The Cytoplasmic segment spans residues 1-35 (MANCVRCCCWLLVLMLMALAITAAVVFVRYKNGEG). The chain crosses the membrane as a helical span at residues 36 to 56 (VFPFPGVPGAVDHKYADALAV). The Extracellular portion of the chain corresponds to 57-518 (ALQFFQVQKS…STSSLARSLS (462 aa)). N-linked (GlcNAc...) asparagine glycosylation is present at asparagine 71. Residue aspartate 101 is the Nucleophile of the active site. Residues asparagine 214, asparagine 251, and asparagine 272 are each glycosylated (N-linked (GlcNAc...) asparagine). Histidine 436 is a catalytic residue. N-linked (GlcNAc...) asparagine glycosylation is present at asparagine 477. Active-site residues include aspartate 482 and glutamate 491.

It belongs to the glycosyl hydrolase 9 (cellulase E) family.

Its subcellular location is the membrane. It carries out the reaction Endohydrolysis of (1-&gt;4)-beta-D-glucosidic linkages in cellulose, lichenin and cereal beta-D-glucans.. This Oryza sativa subsp. japonica (Rice) protein is Endoglucanase 18.